The chain runs to 68 residues: MPKLKTKSAVKKRFKFTATGKVIASQAGKKHFMRRRTKAQIRNLRGTTILCPQDGYNIKKYFLPYGIN.

This sequence belongs to the bacterial ribosomal protein bL35 family.

The sequence is that of Large ribosomal subunit protein bL35 from Rickettsia typhi (strain ATCC VR-144 / Wilmington).